A 263-amino-acid polypeptide reads, in one-letter code: Small ribosomal subunit protein uS3 (263 aa).

Positions 39 to 107 constitute a KH type-2 domain; sequence VREYLKKKLK…PVHVNIEEIR (69 aa). A disordered region spans residues 211 to 263; it reads GELPPEAATPREEERRPRRAPRGDRPDGGRPGRPGGRGRGPRKADAAPAPEGE. Positions 219 to 240 are enriched in basic and acidic residues; sequence TPREEERRPRRAPRGDRPDGGR.

This sequence belongs to the universal ribosomal protein uS3 family. Part of the 30S ribosomal subunit. Forms a tight complex with proteins S10 and S14.

Binds the lower part of the 30S subunit head. Binds mRNA in the 70S ribosome, positioning it for translation. In Bordetella petrii (strain ATCC BAA-461 / DSM 12804 / CCUG 43448), this protein is Small ribosomal subunit protein uS3.